Reading from the N-terminus, the 704-residue chain is MSEQKAFSLKIDEQNIAWLAIDVPNEKMNTLQAAFADEMKEIFAQLKDTSGVKGMVIHSLKPDNFVAGADVRMLEACTTASEAEALAKQGQELFQQLSDLPYPVVAAIHGPCLGGGLELALACDYRVCTDSDKTRLGLPEVQLGLLPGSGGTQRLPRLIGLLPSLDLILTGKQLRAKKAKKLGVVDACVPETVLLDIAKMHVEKGKKKGKQKQSTKEKLMSGSGLGRKFVFEQAAKKTNEKTRGNYPATVAILEVIQHGLEKGFAQGQELEAKRFGELVMSSESKALRSIFFATTEMKKENGAEAEPTAVNKVGVLGGGLMGAGISHVSVAKAKVPVRIKDVSNDGVLNALNYNYKLFEKQRKRRIISKAGLQSKMLQLSGGIDFTSFNHIDVVIEAVFEDLDLKQAMVADIEANAKPETIFATNTSSLPIHKIAEKAERPENIVGLHYFSPVEKMPLVEVIPHETTSEETISTVVALAKKQGKTPIVVKDKAGFYVNRILAPYMNEAAHILLANEPIEQLDGALLDFGFPVGPITLLDEVGVDIGAKIMPILVNELGERFKGPDVFDTLLNDGRKGRKTGKGFYTYKGKKKEVDKSVYKLLNLTPESKLSDNDIALRCVLPMLNEAVRCLDDGIIRSPRDGDIGAIFGIGFPPFLGGPFCYMDQFGLKELVEKMNEFASKYGDRYAPCDGLLTRAGEGRNFYD.

The enoyl-CoA hydratase stretch occupies residues 1 to 190; the sequence is MSEQKAFSLK…KLGVVDACVP (190 aa). A 3-hydroxyacyl-CoA dehydrogenase region spans residues 308–704; sequence TAVNKVGVLG…RAGEGRNFYD (397 aa).

It in the N-terminal section; belongs to the enoyl-CoA hydratase/isomerase family. In the central section; belongs to the 3-hydroxyacyl-CoA dehydrogenase family. In terms of assembly, heterotetramer of two alpha chains (FadJ) and two beta chains (FadI).

It localises to the cytoplasm. It carries out the reaction a (3S)-3-hydroxyacyl-CoA = a (2E)-enoyl-CoA + H2O. It catalyses the reaction a 4-saturated-(3S)-3-hydroxyacyl-CoA = a (3E)-enoyl-CoA + H2O. The enzyme catalyses a (3S)-3-hydroxyacyl-CoA + NAD(+) = a 3-oxoacyl-CoA + NADH + H(+). The catalysed reaction is (3S)-3-hydroxybutanoyl-CoA = (3R)-3-hydroxybutanoyl-CoA. The protein operates within lipid metabolism; fatty acid beta-oxidation. Its function is as follows. Catalyzes the formation of a hydroxyacyl-CoA by addition of water on enoyl-CoA. Also exhibits 3-hydroxyacyl-CoA epimerase and 3-hydroxyacyl-CoA dehydrogenase activities. This is Fatty acid oxidation complex subunit alpha from Vibrio campbellii (strain ATCC BAA-1116).